The chain runs to 363 residues: Protein RecA (363 aa).

79 to 86 (GPESSGKT) contributes to the ATP binding site.

This sequence belongs to the RecA family.

It is found in the cytoplasm. Can catalyze the hydrolysis of ATP in the presence of single-stranded DNA, the ATP-dependent uptake of single-stranded DNA by duplex DNA, and the ATP-dependent hybridization of homologous single-stranded DNAs. It interacts with LexA causing its activation and leading to its autocatalytic cleavage. The polypeptide is Protein RecA (Methylobacterium radiotolerans (strain ATCC 27329 / DSM 1819 / JCM 2831 / NBRC 15690 / NCIMB 10815 / 0-1)).